We begin with the raw amino-acid sequence, 39 residues long: Photosystem II reaction center protein L (39 aa).

A helical transmembrane segment spans residues 18-38 (SLYLGLLFVFVTGVLMSSYFF).

It belongs to the PsbL family. As to quaternary structure, PSII is composed of 1 copy each of membrane proteins PsbA, PsbB, PsbC, PsbD, PsbE, PsbF, PsbH, PsbI, PsbJ, PsbK, PsbL, PsbM, PsbT, PsbX, PsbY, PsbZ, Psb30/Ycf12, peripheral proteins PsbO, CyanoQ (PsbQ), PsbU, PsbV and a large number of cofactors. It forms dimeric complexes.

The protein resides in the cellular thylakoid membrane. Functionally, one of the components of the core complex of photosystem II (PSII). PSII is a light-driven water:plastoquinone oxidoreductase that uses light energy to abstract electrons from H(2)O, generating O(2) and a proton gradient subsequently used for ATP formation. It consists of a core antenna complex that captures photons, and an electron transfer chain that converts photonic excitation into a charge separation. This subunit is found at the monomer-monomer interface and is required for correct PSII assembly and/or dimerization. The sequence is that of Photosystem II reaction center protein L from Synechococcus sp. (strain CC9902).